We begin with the raw amino-acid sequence, 321 residues long: tRNA-dihydrouridine synthase B (321 aa).

Residues 16–18 (PMA) and Gln-70 contribute to the FMN site. Cys-100 acts as the Proton donor in catalysis. FMN contacts are provided by residues Lys-139, 200-202 (NGD), and 224-225 (GR).

The protein belongs to the Dus family. DusB subfamily. It depends on FMN as a cofactor.

It catalyses the reaction a 5,6-dihydrouridine in tRNA + NAD(+) = a uridine in tRNA + NADH + H(+). The enzyme catalyses a 5,6-dihydrouridine in tRNA + NADP(+) = a uridine in tRNA + NADPH + H(+). Its function is as follows. Catalyzes the synthesis of 5,6-dihydrouridine (D), a modified base found in the D-loop of most tRNAs, via the reduction of the C5-C6 double bond in target uridines. The polypeptide is tRNA-dihydrouridine synthase B (Salmonella typhi).